Here is a 368-residue protein sequence, read N- to C-terminus: Proline-rich protein 5-like (368 aa).

S28 is subject to Phosphoserine. The disordered stretch occupies residues 327 to 368 (PSFPPPHRQCSSEPNITDNPDGLEEGARGSQEGSELNCASLS). Composition is skewed to polar residues over residues 335–344 (QCSSEPNITD) and 357–368 (QEGSELNCASLS).

It belongs to the PROTOR family. As to quaternary structure, interacts with the mammalian target of rapamycin complex 2 (mTORC2) which contains MTOR, MLST8, PRR5, RICTOR, MAPKAP1 and DEPTOR. Interacts with RFFL. Interacts (via C-terminus) with ZFP36 (via C-terminus); this interaction may accelerate ZFP36-mediated mRNA decay during stress. Interacts with RICTOR. Ubiquitinated. Ubiquitination by RFFL promotes proteasomal degradation of PRR5L thereby modifying the substrate-specific activity of the mTORC2 complex. Ubiquitination by RFFL is stimulated by LPA/lysophosphatidic acid.

Functionally, associates with the mTORC2 complex that regulates cellular processes including survival and organization of the cytoskeleton. Regulates the activity of the mTORC2 complex in a substrate-specific manner preventing for instance the specific phosphorylation of PKCs and thereby controlling cell migration. Plays a role in the stimulation of ZFP36-mediated mRNA decay of several ZFP36-associated mRNAs, such as TNF-alpha and GM-CSF, in response to stress. Required for ZFP36 localization to cytoplasmic stress granule (SG) and P-body (PB) in response to stress. This is Proline-rich protein 5-like (PRR5L) from Homo sapiens (Human).